The primary structure comprises 761 residues: Ribonucleoside-diphosphate reductase subunit alpha (761 aa).

The ATP-cone domain maps to 5-95; that stretch reads LFVTKRNGKI…IFHLRKKAFG (91 aa). Residues Lys9, 15–21, Thr55, and Lys91 each bind ATP; that span reads ELINLDK. GDP is bound at residue Thr209. Cys225 and Cys462 are oxidised to a cystine. DTTP is bound by residues 232–234, Arg262, and Arg269; that span reads DNL. Asn437 provides a ligand contact to GDP. Asn437 acts as the Proton acceptor in catalysis. The active-site Cysteine radical intermediate is the Cys439. GDP contacts are provided by residues Glu441 and 623-625; that span reads ETS. Glu441 (proton acceptor) is an active-site residue.

The protein belongs to the ribonucleoside diphosphate reductase large chain family. In terms of assembly, tetramer of two alpha and two beta subunits.

The enzyme catalyses a 2'-deoxyribonucleoside 5'-diphosphate + [thioredoxin]-disulfide + H2O = a ribonucleoside 5'-diphosphate + [thioredoxin]-dithiol. Under complex allosteric control mediated by deoxynucleoside triphosphates and ATP binding to separate specificity and activation sites on the alpha subunit. The type of nucleotide bound at the specificity site determines substrate preference. It seems probable that ATP makes the enzyme reduce CDP and UDP, dGTP favors ADP reduction and dTTP favors GDP reduction. Stimulated by ATP and inhibited by dATP binding to the activity site. In terms of biological role, provides the precursors necessary for DNA synthesis. Catalyzes the biosynthesis of deoxyribonucleotides from the corresponding ribonucleotides. In Buchnera aphidicola subsp. Baizongia pistaciae (strain Bp), this protein is Ribonucleoside-diphosphate reductase subunit alpha (nrdA).